A 653-amino-acid chain; its full sequence is Threonine--tRNA ligase (653 aa).

Positions 1-61 (MIKITFPDGN…NEDAEVKLFK (61 aa)) constitute a TGS domain. Positions 243–542 (DHRKIGKELE…LIEHTAGKFP (300 aa)) are catalytic. Residues C338, H389, and H519 each contribute to the Zn(2+) site.

This sequence belongs to the class-II aminoacyl-tRNA synthetase family. In terms of assembly, homodimer. Requires Zn(2+) as cofactor.

It localises to the cytoplasm. The catalysed reaction is tRNA(Thr) + L-threonine + ATP = L-threonyl-tRNA(Thr) + AMP + diphosphate + H(+). Its function is as follows. Catalyzes the attachment of threonine to tRNA(Thr) in a two-step reaction: L-threonine is first activated by ATP to form Thr-AMP and then transferred to the acceptor end of tRNA(Thr). Also edits incorrectly charged L-seryl-tRNA(Thr). This chain is Threonine--tRNA ligase, found in Porphyromonas gingivalis (strain ATCC BAA-308 / W83).